Here is an 84-residue protein sequence, read N- to C-terminus: Large ribosomal subunit protein bL27 (84 aa).

The tract at residues 1–21 (MAHKKGQGSTRNGRDSHSKRL) is disordered. The segment covering 12-21 (NGRDSHSKRL) has biased composition (basic and acidic residues).

This sequence belongs to the bacterial ribosomal protein bL27 family.

The sequence is that of Large ribosomal subunit protein bL27 from Methylacidiphilum infernorum (isolate V4) (Methylokorus infernorum (strain V4)).